Reading from the N-terminus, the 131-residue chain is Small ribosomal subunit protein uS8c (131 aa).

Belongs to the universal ribosomal protein uS8 family. Part of the 30S ribosomal subunit.

The protein localises to the plastid. It is found in the chloroplast. One of the primary rRNA binding proteins, it binds directly to 16S rRNA central domain where it helps coordinate assembly of the platform of the 30S subunit. In Tupiella akineta (Green alga), this protein is Small ribosomal subunit protein uS8c (rps8).